Consider the following 301-residue polypeptide: Eukaryotic translation initiation factor 3 subunit F (301 aa).

The region spanning 32-169 is the MPN domain; that stretch reads VHVHPVALFS…IKSYISSPLG (138 aa).

It belongs to the eIF-3 subunit F family. As to quaternary structure, component of the eukaryotic translation initiation factor 3 (eIF-3) complex.

It is found in the cytoplasm. Functionally, component of the eukaryotic translation initiation factor 3 (eIF-3) complex, which is involved in protein synthesis of a specialized repertoire of mRNAs and, together with other initiation factors, stimulates binding of mRNA and methionyl-tRNAi to the 40S ribosome. The eIF-3 complex specifically targets and initiates translation of a subset of mRNAs involved in cell proliferation. This chain is Eukaryotic translation initiation factor 3 subunit F, found in Mycosarcoma maydis (Corn smut fungus).